The primary structure comprises 159 residues: Lipoprotein LpqH (159 aa).

Residues 1-21 form the signal peptide; it reads MKRGLTVAVAGAAILVAGLSG. C22 carries the N-palmitoyl cysteine lipid modification. A lipid anchor (S-diacylglycerol cysteine) is attached at C22. Positions 24-51 are disordered; the sequence is SNKSTTGSGETTTAAGTTASPGAASGPK. Low complexity predominate over residues 27–49; sequence STTGSGETTTAAGTTASPGAASG.

Belongs to the mycobacterial 19 kDa antigen family. In terms of processing, modified by Lgt on Cys-22 with an S-linked diacylglycerol with a mixture of C16, C18 and C19 fatty acids, signal peptide is removed by LspA, modifed by Lnt with an amide-linked mixture of C16 and C19 fatty acids.

The protein localises to the cell membrane. Functionally, might be involved in ligand transport. A host TLR2 agonist, modifies host gene expression in response to pathogen. The protein is Lipoprotein LpqH (lpqH) of Mycobacterium bovis (strain ATCC BAA-935 / AF2122/97).